The chain runs to 294 residues: 4-hydroxy-tetrahydrodipicolinate synthase (294 aa).

Position 44 (T44) interacts with pyruvate. Y132 serves as the catalytic Proton donor/acceptor. The active-site Schiff-base intermediate with substrate is K161. Pyruvate is bound at residue I206.

This sequence belongs to the DapA family. Homotetramer; dimer of dimers.

It is found in the cytoplasm. It catalyses the reaction L-aspartate 4-semialdehyde + pyruvate = (2S,4S)-4-hydroxy-2,3,4,5-tetrahydrodipicolinate + H2O + H(+). The protein operates within amino-acid biosynthesis; L-lysine biosynthesis via DAP pathway; (S)-tetrahydrodipicolinate from L-aspartate: step 3/4. Catalyzes the condensation of (S)-aspartate-beta-semialdehyde [(S)-ASA] and pyruvate to 4-hydroxy-tetrahydrodipicolinate (HTPA). This Thermotoga petrophila (strain ATCC BAA-488 / DSM 13995 / JCM 10881 / RKU-1) protein is 4-hydroxy-tetrahydrodipicolinate synthase.